Reading from the N-terminus, the 223-residue chain is Retbindin (223 aa).

Positions 1 to 30 are cleaved as a signal peptide; sequence MANRGHTQPRALAWALGLTLVWILLGACGG. 4 disulfides stabilise this stretch: Cys73/Cys143, Cys80/Cys120, Cys113/Cys157, and Cys126/Cys139.

Belongs to the folate receptor family. Post-translationally, not N-glycosylated.

It is found in the secreted. It localises to the extracellular space. The protein localises to the extracellular matrix. Its subcellular location is the interphotoreceptor matrix. The protein resides in the cell membrane. In terms of biological role, riboflavin-binding protein which might have a role in retinal flavin transport. The polypeptide is Retbindin (RTBDN) (Canis lupus familiaris (Dog)).